A 404-amino-acid polypeptide reads, in one-letter code: 5-azacytidine-induced protein 2 (404 aa).

A homodimerization region spans residues 1-198; sequence MDTLVEDDIC…TELQKARQTG (198 aa). Positions 40 to 198 form a coiled coil; that stretch reads ALVTAYEDIK…TELQKARQTG (159 aa). Positions 229–269 are interaction with TBK1 and IKBKE; the sequence is SDHMQHAYWELRREMANLHLVTRVQAELLRQLKTAAAGKAC. Ser-330 is subject to Phosphoserine. 2 disordered regions span residues 332–351 and 356–390; these read TDNERLTPNDGADFQEHNSY and LEDNSWVFPSPPKSSETAFGESKSKILPSPNLPPL. Phosphoserine is present on Ser-365.

Homodimer. Interacts with IKBKE, TBK1 and TICAM1. Interacts with TAX1BP1. Interacts with CALCOCO2. In terms of processing, ubiquitinated via 'Lys-48'-linked polyubiquitination by TRIM38, leading to its degradation.

It localises to the cytoplasm. Functionally, adapter protein which binds TBK1 and IKBKE playing a role in antiviral innate immunity. Activates serine/threonine-protein kinase TBK1 and facilitates its oligomerization. Enhances the phosphorylation of NF-kappa-B p65 subunit RELA by TBK1. Promotes TBK1-induced as well as TNF-alpha or PMA-induced activation of NF-kappa-B. Participates in IFNB promoter activation via TICAM1. The sequence is that of 5-azacytidine-induced protein 2 (Azi2) from Rattus norvegicus (Rat).